The sequence spans 676 residues: Putative Xaa-Pro dipeptidyl-peptidase (676 aa).

Active-site charge relay system residues include serine 224, aspartate 330, and histidine 361. A disordered region spans residues arginine 423–proline 450.

It belongs to the peptidase S15 family.

The catalysed reaction is Hydrolyzes Xaa-Pro-|- bonds to release unblocked, N-terminal dipeptides from substrates including Ala-Pro-|-p-nitroanilide and (sequentially) Tyr-Pro-|-Phe-Pro-|-Gly-Pro-|-Ile.. This Streptomyces avermitilis (strain ATCC 31267 / DSM 46492 / JCM 5070 / NBRC 14893 / NCIMB 12804 / NRRL 8165 / MA-4680) protein is Putative Xaa-Pro dipeptidyl-peptidase.